A 250-amino-acid chain; its full sequence is Urease accessory protein UreG 3 (250 aa).

Residues Met1 to Pro24 form a disordered region. Residues Ala7–Pro17 show a composition bias toward low complexity. GTP is bound at residue Gly37 to Ser44. The disordered stretch occupies residues Gly230–Ser250.

The protein belongs to the SIMIBI class G3E GTPase family. UreG subfamily. In terms of assembly, homodimer. UreD, UreF and UreG form a complex that acts as a GTP-hydrolysis-dependent molecular chaperone, activating the urease apoprotein by helping to assemble the nickel containing metallocenter of UreC. The UreE protein probably delivers the nickel.

It is found in the cytoplasm. Functionally, facilitates the functional incorporation of the urease nickel metallocenter. This process requires GTP hydrolysis, probably effectuated by UreG. The polypeptide is Urease accessory protein UreG 3 (Streptomyces griseus subsp. griseus (strain JCM 4626 / CBS 651.72 / NBRC 13350 / KCC S-0626 / ISP 5235)).